Here is a 376-residue protein sequence, read N- to C-terminus: Succinyl-diaminopimelate desuccinylase (376 aa).

Residue histidine 67 coordinates Zn(2+). Aspartate 69 is a catalytic residue. Residue aspartate 100 coordinates Zn(2+). Glutamate 134 serves as the catalytic Proton acceptor. 3 residues coordinate Zn(2+): glutamate 135, glutamate 163, and histidine 349.

The protein belongs to the peptidase M20A family. DapE subfamily. In terms of assembly, homodimer. Zn(2+) serves as cofactor. Co(2+) is required as a cofactor.

It carries out the reaction N-succinyl-(2S,6S)-2,6-diaminopimelate + H2O = (2S,6S)-2,6-diaminopimelate + succinate. It functions in the pathway amino-acid biosynthesis; L-lysine biosynthesis via DAP pathway; LL-2,6-diaminopimelate from (S)-tetrahydrodipicolinate (succinylase route): step 3/3. Functionally, catalyzes the hydrolysis of N-succinyl-L,L-diaminopimelic acid (SDAP), forming succinate and LL-2,6-diaminopimelate (DAP), an intermediate involved in the bacterial biosynthesis of lysine and meso-diaminopimelic acid, an essential component of bacterial cell walls. In Shewanella sediminis (strain HAW-EB3), this protein is Succinyl-diaminopimelate desuccinylase.